Here is a 406-residue protein sequence, read N- to C-terminus: E3 ubiquitin-protein ligase RING1 (406 aa).

Phosphothreonine is present on Thr24. The necessary for transcriptional repression stretch occupies residues 30–234 (MDGTEIAVSP…GGAGSEDSGD (205 aa)). Ser38 bears the Phosphoserine mark. The RING-type zinc-finger motif lies at 48-88 (CPICLDMLKNTMTTKECLHRFCSDCIVTALRSGNKECPTCR). Ser140, Ser187, and Ser190 each carry phosphoserine. Disordered regions lie at residues 151-263 (HRAQ…GEIE) and 309-354 (QQQE…PSLE). Over residues 175-187 (EPGEGEGDGEDIS) the composition is skewed to acidic residues. Positions 201–204 (KRPR) match the Nuclear localization signal motif. Positions 205-228 (GGGAGGSSVGTGGGAAGGACGGAG) are enriched in gly residues. Thr215 is subject to Phosphothreonine. Ser229 and Ser232 each carry phosphoserine. Residues 230–406 (EDSGDRGGTL…LCYAPTKDPK (177 aa)) form a necessary for interaction with CBX2 region. Residues 235-244 (RGGTLGGGTL) are compositionally biased toward gly residues. A compositionally biased stretch (pro residues) spans 246 to 258 (PPSPPGAPSPPEP). Phosphoserine is present on residues Ser248 and Ser254. Positions 317 to 343 (GGPGGGASDTGGPDGGGGERGVSGGGE) are enriched in gly residues.

In terms of assembly, component of chromatin-associated Polycomb (PcG) complexes. Part of the E2F6.com-1 complex in G0 phase composed of E2F6, MGA, MAX, TFDP1, CBX3, BAT8, EUHMTASE1, RING1, RNF2/RING2 MBLR, L3MBTL2 and YAF2. Interacts with CBX2 and PCGF6. Component of a PRC1-like complex. Component of repressive BCOR complex containing Polycomb group subcomplex at least composed of RYBP, PCGF1, BCOR and RNF2/RING2. Interacts with BMI1, PHC2, PCGF2, RNF2; CBX6, CBX7 and CBX8. Interacts with MN1. Interacts with USP26.

The protein resides in the nucleus speckle. It catalyses the reaction S-ubiquitinyl-[E2 ubiquitin-conjugating enzyme]-L-cysteine + [acceptor protein]-L-lysine = [E2 ubiquitin-conjugating enzyme]-L-cysteine + N(6)-ubiquitinyl-[acceptor protein]-L-lysine.. It participates in protein modification; protein ubiquitination. In terms of biological role, constitutes one of the E3 ubiquitin-protein ligases that mediate monoubiquitination of 'Lys-119' of histone H2A, thereby playing a central role in histone code and gene regulation. H2A 'Lys-119' ubiquitination gives a specific tag for epigenetic transcriptional repression and participates in X chromosome inactivation of female mammals. Essential component of a Polycomb group (PcG) multiprotein PRC1-like complex, a complex class required to maintain the transcriptionally repressive state of many genes, including Hox genes, throughout development. PcG PRC1 complex acts via chromatin remodeling and modification of histones, rendering chromatin heritably changed in its expressibility. Compared to RNF2/RING2, it does not have the main E3 ubiquitin ligase activity on histone H2A, and it may rather act as a modulator of RNF2/RING2 activity. This Rattus norvegicus (Rat) protein is E3 ubiquitin-protein ligase RING1.